Consider the following 367-residue polypeptide: 3-dehydroquinate synthase (367 aa).

NAD(+) contacts are provided by residues 108 to 112 (GVIGD), 132 to 133 (TT), Lys-145, and Lys-154. The Zn(2+) site is built by Glu-187, His-249, and His-267.

Belongs to the sugar phosphate cyclases superfamily. Dehydroquinate synthase family. Co(2+) is required as a cofactor. Requires Zn(2+) as cofactor. NAD(+) serves as cofactor.

The protein resides in the cytoplasm. The enzyme catalyses 7-phospho-2-dehydro-3-deoxy-D-arabino-heptonate = 3-dehydroquinate + phosphate. It functions in the pathway metabolic intermediate biosynthesis; chorismate biosynthesis; chorismate from D-erythrose 4-phosphate and phosphoenolpyruvate: step 2/7. Functionally, catalyzes the conversion of 3-deoxy-D-arabino-heptulosonate 7-phosphate (DAHP) to dehydroquinate (DHQ). The polypeptide is 3-dehydroquinate synthase (Paracoccus denitrificans (strain Pd 1222)).